The sequence spans 499 residues: Cysteine--tRNA ligase (499 aa).

C29 is a binding site for Zn(2+). Residues 31-41 (VTVYDLCHLGH) carry the 'HIGH' region motif. Zn(2+)-binding residues include C213, H238, and E242. A 'KMSKS' region motif is present at residues 270–274 (KMSKS). K273 is a binding site for ATP.

It belongs to the class-I aminoacyl-tRNA synthetase family. Monomer. Zn(2+) serves as cofactor.

It is found in the cytoplasm. It carries out the reaction tRNA(Cys) + L-cysteine + ATP = L-cysteinyl-tRNA(Cys) + AMP + diphosphate. This chain is Cysteine--tRNA ligase, found in Synechococcus sp. (strain CC9902).